An 80-amino-acid chain; its full sequence is MTGTGTTGFEEQLARLQEIVRRLETGELPLEEGVALYKEGLELAAGCRKRLQTARNDIKVFSDGVLKDFDMPEDSPAADD.

The protein belongs to the XseB family. As to quaternary structure, heterooligomer composed of large and small subunits.

The protein localises to the cytoplasm. It catalyses the reaction Exonucleolytic cleavage in either 5'- to 3'- or 3'- to 5'-direction to yield nucleoside 5'-phosphates.. In terms of biological role, bidirectionally degrades single-stranded DNA into large acid-insoluble oligonucleotides, which are then degraded further into small acid-soluble oligonucleotides. This is Exodeoxyribonuclease 7 small subunit from Oleidesulfovibrio alaskensis (strain ATCC BAA-1058 / DSM 17464 / G20) (Desulfovibrio alaskensis).